The chain runs to 68 residues: DNA-directed RNA polymerase subunit omega (68 aa).

Belongs to the RNA polymerase subunit omega family. As to quaternary structure, the RNAP catalytic core consists of 2 alpha, 1 beta, 1 beta' and 1 omega subunit. When a sigma factor is associated with the core the holoenzyme is formed, which can initiate transcription.

It catalyses the reaction RNA(n) + a ribonucleoside 5'-triphosphate = RNA(n+1) + diphosphate. Its function is as follows. Promotes RNA polymerase assembly. Latches the N- and C-terminal regions of the beta' subunit thereby facilitating its interaction with the beta and alpha subunits. The protein is DNA-directed RNA polymerase subunit omega of Chromobacterium violaceum (strain ATCC 12472 / DSM 30191 / JCM 1249 / CCUG 213 / NBRC 12614 / NCIMB 9131 / NCTC 9757 / MK).